Here is a 360-residue protein sequence, read N- to C-terminus: UDP-N-acetylglucosamine--N-acetylmuramyl-(pentapeptide) pyrophosphoryl-undecaprenol N-acetylglucosamine transferase (360 aa).

UDP-N-acetyl-alpha-D-glucosamine is bound by residues Thr17–Gly19, Asn130, Arg166, Ser200, Ile247, and Gln291.

It belongs to the glycosyltransferase 28 family. MurG subfamily.

Its subcellular location is the cell membrane. The enzyme catalyses di-trans,octa-cis-undecaprenyl diphospho-N-acetyl-alpha-D-muramoyl-L-alanyl-D-glutamyl-meso-2,6-diaminopimeloyl-D-alanyl-D-alanine + UDP-N-acetyl-alpha-D-glucosamine = di-trans,octa-cis-undecaprenyl diphospho-[N-acetyl-alpha-D-glucosaminyl-(1-&gt;4)]-N-acetyl-alpha-D-muramoyl-L-alanyl-D-glutamyl-meso-2,6-diaminopimeloyl-D-alanyl-D-alanine + UDP + H(+). The protein operates within cell wall biogenesis; peptidoglycan biosynthesis. Functionally, cell wall formation. Catalyzes the transfer of a GlcNAc subunit on undecaprenyl-pyrophosphoryl-MurNAc-pentapeptide (lipid intermediate I) to form undecaprenyl-pyrophosphoryl-MurNAc-(pentapeptide)GlcNAc (lipid intermediate II). This Corynebacterium efficiens (strain DSM 44549 / YS-314 / AJ 12310 / JCM 11189 / NBRC 100395) protein is UDP-N-acetylglucosamine--N-acetylmuramyl-(pentapeptide) pyrophosphoryl-undecaprenol N-acetylglucosamine transferase.